The primary structure comprises 183 residues: ATP synthase subunit b, chloroplastic (183 aa).

A helical transmembrane segment spans residues 27–49; that stretch reads LATNLINLTVVVGVLIFFGKGVL.

It belongs to the ATPase B chain family. As to quaternary structure, F-type ATPases have 2 components, F(1) - the catalytic core - and F(0) - the membrane proton channel. F(1) has five subunits: alpha(3), beta(3), gamma(1), delta(1), epsilon(1). F(0) has four main subunits: a(1), b(1), b'(1) and c(10-14). The alpha and beta chains form an alternating ring which encloses part of the gamma chain. F(1) is attached to F(0) by a central stalk formed by the gamma and epsilon chains, while a peripheral stalk is formed by the delta, b and b' chains.

It localises to the plastid. The protein localises to the chloroplast thylakoid membrane. Functionally, f(1)F(0) ATP synthase produces ATP from ADP in the presence of a proton or sodium gradient. F-type ATPases consist of two structural domains, F(1) containing the extramembraneous catalytic core and F(0) containing the membrane proton channel, linked together by a central stalk and a peripheral stalk. During catalysis, ATP synthesis in the catalytic domain of F(1) is coupled via a rotary mechanism of the central stalk subunits to proton translocation. Component of the F(0) channel, it forms part of the peripheral stalk, linking F(1) to F(0). The polypeptide is ATP synthase subunit b, chloroplastic (Brachypodium distachyon (Purple false brome)).